A 669-amino-acid chain; its full sequence is DNA ligase (669 aa).

NAD(+)-binding positions include 35–39 (DSVYD), 84–85 (SL), and Glu116. Catalysis depends on Lys118, which acts as the N6-AMP-lysine intermediate. NAD(+) contacts are provided by Arg139, Glu176, Lys291, and Lys315. Zn(2+) is bound by residues Cys409, Cys412, Cys427, and Cys432. Residues 591–669 (TTKATLAGKT…EAQLLELIKA (79 aa)) form the BRCT domain.

This sequence belongs to the NAD-dependent DNA ligase family. LigA subfamily. Mg(2+) serves as cofactor. It depends on Mn(2+) as a cofactor.

The enzyme catalyses NAD(+) + (deoxyribonucleotide)n-3'-hydroxyl + 5'-phospho-(deoxyribonucleotide)m = (deoxyribonucleotide)n+m + AMP + beta-nicotinamide D-nucleotide.. Its function is as follows. DNA ligase that catalyzes the formation of phosphodiester linkages between 5'-phosphoryl and 3'-hydroxyl groups in double-stranded DNA using NAD as a coenzyme and as the energy source for the reaction. It is essential for DNA replication and repair of damaged DNA. This chain is DNA ligase, found in Microcystis aeruginosa (strain NIES-843 / IAM M-2473).